A 127-amino-acid polypeptide reads, in one-letter code: Small ribosomal subunit protein uS12 (127 aa).

Over residues 11–20 the composition is skewed to basic residues; it reads GRKPKKKKSK. A disordered region spans residues 11–30; that stretch reads GRKPKKKKSKAPALQGNPQK. A 3-methylthioaspartic acid modification is found at aspartate 89. The interval 105–127 is disordered; it reads AGVEGRRQSRSKYGAKRPKDQKK. Residues 112–127 show a composition bias toward basic residues; it reads QSRSKYGAKRPKDQKK.

The protein belongs to the universal ribosomal protein uS12 family. As to quaternary structure, part of the 30S ribosomal subunit. Contacts proteins S8 and S17. May interact with IF1 in the 30S initiation complex.

With S4 and S5 plays an important role in translational accuracy. In terms of biological role, interacts with and stabilizes bases of the 16S rRNA that are involved in tRNA selection in the A site and with the mRNA backbone. Located at the interface of the 30S and 50S subunits, it traverses the body of the 30S subunit contacting proteins on the other side and probably holding the rRNA structure together. The combined cluster of proteins S8, S12 and S17 appears to hold together the shoulder and platform of the 30S subunit. The polypeptide is Small ribosomal subunit protein uS12 (Thermotoga maritima (strain ATCC 43589 / DSM 3109 / JCM 10099 / NBRC 100826 / MSB8)).